Reading from the N-terminus, the 947-residue chain is Translation initiation factor IF-2 (947 aa).

The interval 69 to 353 is disordered; that stretch reads RRRKEVPQEE…TPKPQKKTEV (285 aa). Positions 81 to 108 are enriched in low complexity; sequence APPAAAEEPSSVDTAVAEEAPAEEVQPV. Acidic residues predominate over residues 139 to 155; sequence PVVEEVIAEPAVEEVVE. Basic and acidic residues-rich tracts occupy residues 215-226 and 246-262; these read VTKEKPKVEKAT and KRQERAKNGKGRPERPK. Residues 264–284 are compositionally biased toward low complexity; that stretch reads AKPSGGPAPRAKEAAPQAAVP. A compositionally biased stretch (basic and acidic residues) spans 327–337; it reads QVYEPERDERR. Positions 338–348 are enriched in basic residues; the sequence is MRRGKKTPKPQ. The tr-type G domain occupies 447 to 616; sequence PRPPVVTIMG…LLQAEVLELK (170 aa). The interval 456–463 is G1; the sequence is GHVDHGKT. Position 456–463 (456–463) interacts with GTP; it reads GHVDHGKT. Residues 481-485 form a G2 region; sequence GITQH. The tract at residues 502–505 is G3; the sequence is DTPG. GTP-binding positions include 502-506 and 556-559; these read DTPGH and NKMD. A G4 region spans residues 556 to 559; the sequence is NKMD. Positions 592-594 are G5; it reads SAK.

This sequence belongs to the TRAFAC class translation factor GTPase superfamily. Classic translation factor GTPase family. IF-2 subfamily.

The protein localises to the cytoplasm. Functionally, one of the essential components for the initiation of protein synthesis. Protects formylmethionyl-tRNA from spontaneous hydrolysis and promotes its binding to the 30S ribosomal subunits. Also involved in the hydrolysis of GTP during the formation of the 70S ribosomal complex. In Syntrophotalea carbinolica (strain DSM 2380 / NBRC 103641 / GraBd1) (Pelobacter carbinolicus), this protein is Translation initiation factor IF-2.